Reading from the N-terminus, the 83-residue chain is Small ribosomal subunit protein bS18 (83 aa).

Belongs to the bacterial ribosomal protein bS18 family. In terms of assembly, part of the 30S ribosomal subunit. Forms a tight heterodimer with protein bS6.

Binds as a heterodimer with protein bS6 to the central domain of the 16S rRNA, where it helps stabilize the platform of the 30S subunit. This Tropheryma whipplei (strain TW08/27) (Whipple's bacillus) protein is Small ribosomal subunit protein bS18.